The sequence spans 401 residues: MTELAPKASPAHSIARVLVIDDSAVARGLMTRWVEEDSDLTLIGSAVDGEQGLRKAEELKPDLIVLDVEMPKMDGLAALPLLLKAVPGCKIVMASTLTRRGGEVTIRALSMGAADYASKPQAGRLAGAEEFRRDLLLKLKALAPRPIPPVPTQRDMAPSPAPATPAAPGAPVARSITPPPPPSSSAPAKKAFAPVAQPPQGRGTPRNTARPEIIAIGSSTGGPQALRDVIAAFPADVRSPIVIAQHMPALFTKILAEHLTKAGKLVCKEAEDNERLKPGCVYIAPGDFHMTIRKDAAGFYAVLDQTPPINFCRPAVDPLFQSVAEVTRGAALGIVLTGMGHDGREGARMLRSVGGTILAQDEATSVVWGMPGAVAEAGLADEILSLADMGPGIVRRAKGGN.

One can recognise a Response regulatory domain in the interval 16–134 (RVLVIDDSAV…LAGAEEFRRD (119 aa)). A 4-aspartylphosphate modification is found at D67. The segment at 146–208 (PIPPVPTQRD…PQGRGTPRNT (63 aa)) is disordered. Composition is skewed to low complexity over residues 166–176 (AAPGAPVARSI) and 185–199 (SAPA…AQPP). Positions 205-400 (PRNTARPEII…PGIVRRAKGG (196 aa)) constitute a CheB-type methylesterase domain. Catalysis depends on residues S219, H246, and D342.

The protein belongs to the CheB family. In terms of processing, phosphorylated by CheA. Phosphorylation of the N-terminal regulatory domain activates the methylesterase activity.

Its subcellular location is the cytoplasm. It catalyses the reaction [protein]-L-glutamate 5-O-methyl ester + H2O = L-glutamyl-[protein] + methanol + H(+). The enzyme catalyses L-glutaminyl-[protein] + H2O = L-glutamyl-[protein] + NH4(+). Involved in chemotaxis. Part of a chemotaxis signal transduction system that modulates chemotaxis in response to various stimuli. Catalyzes the demethylation of specific methylglutamate residues introduced into the chemoreceptors (methyl-accepting chemotaxis proteins or MCP) by CheR. Also mediates the irreversible deamidation of specific glutamine residues to glutamic acid. The chain is Protein-glutamate methylesterase/protein-glutamine glutaminase from Maricaulis maris (strain MCS10) (Caulobacter maris).